Consider the following 320-residue polypeptide: MRSAQVYRWQIPMDAGVVLRDRRLKTRDGLYVCLREGEREGWGEISPLPGFSQESWEDAQSVLLAWVNNWLAGDCELPQMPSVAFGVSCALAELADTLPQAANYRAAPLCNGDPDDLILKLADMPGEKVAKVKVGLYEAVRDGMVVNLLLEAIPDLHLRLDANRAWTPLKGQQFAKYVNPDYRHRIAFLEEPCKTRDDSRAFARETGIAIAWDESLREPDFAFVAEEGVRAVVIKPTLTGSLDKVREQVQAAHALGLTAVISSSIESSLGLTQLARIAAWLTPDTIPGLDTLDLMQAQQVRRWPGSPLPLVDVDALERLL.

K133 (proton donor) is an active-site residue. Positions 161, 190, and 213 each coordinate Mg(2+). K235 (proton acceptor) is an active-site residue.

It belongs to the mandelate racemase/muconate lactonizing enzyme family. MenC type 1 subfamily. Requires a divalent metal cation as cofactor.

The catalysed reaction is (1R,6R)-6-hydroxy-2-succinyl-cyclohexa-2,4-diene-1-carboxylate = 2-succinylbenzoate + H2O. It participates in quinol/quinone metabolism; 1,4-dihydroxy-2-naphthoate biosynthesis; 1,4-dihydroxy-2-naphthoate from chorismate: step 4/7. It functions in the pathway quinol/quinone metabolism; menaquinone biosynthesis. Functionally, converts 2-succinyl-6-hydroxy-2,4-cyclohexadiene-1-carboxylate (SHCHC) to 2-succinylbenzoate (OSB). This chain is o-succinylbenzoate synthase, found in Escherichia coli O81 (strain ED1a).